A 408-amino-acid polypeptide reads, in one-letter code: Multidrug resistance protein MdtG (408 aa).

11 helical membrane passes run 16-36 (LIVAWLGCFLTGAAFSLVMPF), 58-78 (IVFSITFLFSAIASPFWGGLA), 92-112 (LGMGIVMVLMGLAQNIWQFLI), 115-135 (ALLGLLGGFVPNANALIATQV), 146-166 (TLSTGGVSGALLGPMAGGLLA), 173-193 (PVFFITASVLILCFFVTLFCI), 224-244 (LFVTTLIIQVATGSIAPILTL), 256-276 (VAFISGMIASVPGVAALLSAP), 290-310 (ILITALIFSVLLLIPMSYVQT), 319-339 (FLLGAADGALLPAVQTLLVYN), and 378-398 (AVFLVTAGVVLFNAVYSWNSL).

The protein belongs to the major facilitator superfamily. DHA1 family. MdtG (TC 2.A.1.2.20) subfamily.

It localises to the cell inner membrane. Functionally, confers resistance to fosfomycin and deoxycholate. This chain is Multidrug resistance protein MdtG, found in Escherichia coli O139:H28 (strain E24377A / ETEC).